Here is a 308-residue protein sequence, read N- to C-terminus: Taste receptor type 2 member 43 (308 aa).

Met-1 is a topological domain (extracellular). Residues 2–22 (ITFLPIIFSILVVVTFVIGNC) traverse the membrane as a helical segment. The Cytoplasmic portion of the chain corresponds to 23-46 (ANGFIALVNSTEWVKRQKISFADQ). The chain crosses the membrane as a helical span at residues 47 to 67 (ILTALAVSRVGLLWVLLLNWY). Topologically, residues 68–86 (ATVLNPAFYSVEVRTIVYN) are extracellular. Residues 87–107 (LWAVINHFSNWLATSLSIFYL) traverse the membrane as a helical segment. Topologically, residues 108–126 (LKIANFSNLIFLHLKRRVK) are cytoplasmic. The chain crosses the membrane as a helical span at residues 127–147 (SVVLVILLGPLLFLVCHLFVV). At 148–178 (NMNEIVRTKEYEGNMTWKSKLRSAMYLSNTT) the chain is on the extracellular side. Asn-161 and Asn-176 each carry an N-linked (GlcNAc...) asparagine glycan. The chain crosses the membrane as a helical span at residues 179 to 199 (VTILANLVPFILTLISFLLLI). Over 200–229 (CSLCKHLKKMQLRDKGSQDPSTKVHIKALQ) the chain is Cytoplasmic. A helical membrane pass occupies residues 230–249 (TVISLLLCVIYFLSIMISSW). Topologically, residues 250 to 258 (SLGRVENKA) are extracellular. Residues 259–279 (VFMFCKAIRFSYPSAHAFILI) traverse the membrane as a helical segment. Residues 280-308 (WGNKKLKQTLLSVLWNVRYCVKGQKLPSP) are Cytoplasmic-facing.

It belongs to the G-protein coupled receptor T2R family.

It is found in the membrane. The protein localises to the cell projection. The protein resides in the cilium membrane. Its function is as follows. Gustducin-coupled receptor immplicated in the perception of bitter compounds in the oral cavity and the gastrointestinal tract. Signals through PLCB2 and the calcium-regulated cation channel TRPM5. Activated by the sulfonyl amide sweeteners saccharin and acesulfame K. In airway epithelial cells, binding of bitter compounds increases the intracellular calcium ion concentration and stimulates ciliary beat frequency. May act as chemosensory receptors in airway epithelial cells to detect and eliminate potential noxious agents from the airways. The protein is Taste receptor type 2 member 43 (TAS2R43) of Papio hamadryas (Hamadryas baboon).